The chain runs to 163 residues: MSFNFRIGQGYDVHAFGPGDHLMLGGVRMAHSHGVLAHSDGDVVLHALCDAMLGGLALGDIGVHFPPSDARWKGADSAQFVQHCDQLLRDRGWRVGNADITVICERPKVGPHALAMRERIAGLLAIELDAVSVKATTSEKLGFTGRSEGIAAQAAVLLGKIAA.

2 residues coordinate a divalent metal cation: aspartate 12 and histidine 14. 4-CDP-2-C-methyl-D-erythritol 2-phosphate contacts are provided by residues 12–14 (DVH) and 38–39 (HS). Histidine 46 is a binding site for a divalent metal cation. Residues 60-62 (DIG), 136-139 (TTSE), phenylalanine 143, and arginine 146 each bind 4-CDP-2-C-methyl-D-erythritol 2-phosphate.

This sequence belongs to the IspF family. In terms of assembly, homotrimer. Requires a divalent metal cation as cofactor.

It carries out the reaction 4-CDP-2-C-methyl-D-erythritol 2-phosphate = 2-C-methyl-D-erythritol 2,4-cyclic diphosphate + CMP. The protein operates within isoprenoid biosynthesis; isopentenyl diphosphate biosynthesis via DXP pathway; isopentenyl diphosphate from 1-deoxy-D-xylulose 5-phosphate: step 4/6. Involved in the biosynthesis of isopentenyl diphosphate (IPP) and dimethylallyl diphosphate (DMAPP), two major building blocks of isoprenoid compounds. Catalyzes the conversion of 4-diphosphocytidyl-2-C-methyl-D-erythritol 2-phosphate (CDP-ME2P) to 2-C-methyl-D-erythritol 2,4-cyclodiphosphate (ME-CPP) with a corresponding release of cytidine 5-monophosphate (CMP). The polypeptide is 2-C-methyl-D-erythritol 2,4-cyclodiphosphate synthase (Xanthomonas campestris pv. campestris (strain 8004)).